The following is a 550-amino-acid chain: Medium-chain acyl-CoA ligase Mig (550 aa).

Positions 1–19 (MSDTTTAFTVPAVAKAVAA) are cleaved as a signal peptide.

It belongs to the ATP-dependent AMP-binding enzyme family.

It is found in the secreted. The protein resides in the cell wall. It catalyses the reaction a medium-chain fatty acid + ATP + CoA = a medium-chain fatty acyl-CoA + AMP + diphosphate. It carries out the reaction hexanoate + ATP + CoA = hexanoyl-CoA + AMP + diphosphate. The catalysed reaction is heptanoate + ATP + CoA = heptanoyl-CoA + AMP + diphosphate. The enzyme catalyses octanoate + ATP + CoA = octanoyl-CoA + AMP + diphosphate. It catalyses the reaction decanoate + ATP + CoA = decanoyl-CoA + AMP + diphosphate. It carries out the reaction dodecanoate + ATP + CoA = dodecanoyl-CoA + AMP + diphosphate. The catalysed reaction is tetradecanoate + ATP + CoA = tetradecanoyl-CoA + AMP + diphosphate. The enzyme catalyses (9Z)-octadecenoate + ATP + CoA = (9Z)-octadecenoyl-CoA + AMP + diphosphate. It catalyses the reaction (9Z,12Z,15Z)-octadecatrienoate + ATP + CoA = (9Z,12Z,15Z)-octadecatrienoyl-CoA + AMP + diphosphate. It carries out the reaction (5Z,8Z,11Z,14Z)-eicosatetraenoate + ATP + CoA = (5Z,8Z,11Z,14Z)-eicosatetraenoyl-CoA + AMP + diphosphate. It functions in the pathway lipid metabolism; fatty acid metabolism. With respect to regulation, inhibited by 2-hydroxydodecanoic acid, a typical inhibitor of medium-chain acyl-CoA synthetases. Functionally, catalyzes the activation of medium-chain fatty acids as acyl-coenzyme A (acyl-CoA). Shows maximal activity with saturated fatty acids of medium-chain length between C6 and C12. Has lower activity with tridecanoic acid (C13), tetradecanoic acid (C14) and with unsaturated fatty acids like oleic acid (C18:1), linolenic acid (C18:3) and arachidonic acid (C20:4). Shows weak activity with some aromatic carbon acids. Involved in the metabolism of fatty acid during mycobacterial survival in macrophages. This is Medium-chain acyl-CoA ligase Mig from Mycobacterium avium.